The primary structure comprises 21 residues: Thanatin (21 aa).

Residues C11 and C18 are joined by a disulfide bond.

It localises to the secreted. In terms of biological role, insect defense peptide with a broad spectrum of activity against Gram-positive and Gram-negative bacteria and fungi. No activity against S.aureus. Stops respiration in bacteria but does not permeabilize their inner membranes. This Podisus maculiventris (Spined soldier bug) protein is Thanatin.